The following is a 450-amino-acid chain: uncharacterized protein (450 aa).

Belongs to the heat shock protein 70 family.

This is an uncharacterized protein from Escherichia coli (strain K12).